The primary structure comprises 644 residues: 1-deoxy-D-xylulose-5-phosphate synthase (644 aa).

Thiamine diphosphate contacts are provided by residues H84 and 125–127 (GHS). D156 lines the Mg(2+) pocket. Residues 157–158 (GA), N185, Y296, and E378 contribute to the thiamine diphosphate site. N185 provides a ligand contact to Mg(2+).

It belongs to the transketolase family. DXPS subfamily. Homodimer. It depends on Mg(2+) as a cofactor. Requires thiamine diphosphate as cofactor.

The catalysed reaction is D-glyceraldehyde 3-phosphate + pyruvate + H(+) = 1-deoxy-D-xylulose 5-phosphate + CO2. It functions in the pathway metabolic intermediate biosynthesis; 1-deoxy-D-xylulose 5-phosphate biosynthesis; 1-deoxy-D-xylulose 5-phosphate from D-glyceraldehyde 3-phosphate and pyruvate: step 1/1. Catalyzes the acyloin condensation reaction between C atoms 2 and 3 of pyruvate and glyceraldehyde 3-phosphate to yield 1-deoxy-D-xylulose-5-phosphate (DXP). The polypeptide is 1-deoxy-D-xylulose-5-phosphate synthase (Paramagnetospirillum magneticum (strain ATCC 700264 / AMB-1) (Magnetospirillum magneticum)).